Consider the following 186-residue polypeptide: Ribosome-recycling factor (186 aa).

The protein belongs to the RRF family.

It is found in the cytoplasm. Functionally, responsible for the release of ribosomes from messenger RNA at the termination of protein biosynthesis. May increase the efficiency of translation by recycling ribosomes from one round of translation to another. In Pelodictyon phaeoclathratiforme (strain DSM 5477 / BU-1), this protein is Ribosome-recycling factor.